The sequence spans 26 residues: Conotoxin reg6(gamma) (26 aa).

Positions 1–12 are enriched in acidic residues; that stretch reads RVLEPGXEDPDV. Positions 1 to 26 are disordered; it reads RVLEPGXEDPDVGEPAGEYEHHLLEX. Glu4 carries the 4-carboxyglutamate modification. Residue Pro5 is modified to 4-hydroxyproline. The residue at position 8 (Glu8) is a 4-carboxyglutamate. At Pro10 the chain carries 4-hydroxyproline. Glu14 is modified (4-carboxyglutamate). At Pro15 the chain carries 4-hydroxyproline. Glu18, Glu20, and Glu25 each carry 4-carboxyglutamate.

Expressed by the venom duct.

Its subcellular location is the secreted. This chain is Conotoxin reg6(gamma), found in Conus regius (Crown cone).